Here is a 437-residue protein sequence, read N- to C-terminus: tRNA-2-methylthio-N(6)-dimethylallyladenosine synthase (437 aa).

An MTTase N-terminal domain is found at 3-120 (RKLFIETHGC…LPEMIDAART (118 aa)). [4Fe-4S] cluster contacts are provided by Cys12, Cys49, Cys83, Cys157, Cys161, and Cys164. One can recognise a Radical SAM core domain in the interval 143 to 370 (RVDGPSAYVS…QQRINQQGFE (228 aa)). Residues 373-437 (RRMVGTTQRI…PHSLRGSLLS (65 aa)) form the TRAM domain.

It belongs to the methylthiotransferase family. MiaB subfamily. As to quaternary structure, monomer. Requires [4Fe-4S] cluster as cofactor.

It localises to the cytoplasm. It carries out the reaction N(6)-dimethylallyladenosine(37) in tRNA + (sulfur carrier)-SH + AH2 + 2 S-adenosyl-L-methionine = 2-methylsulfanyl-N(6)-dimethylallyladenosine(37) in tRNA + (sulfur carrier)-H + 5'-deoxyadenosine + L-methionine + A + S-adenosyl-L-homocysteine + 2 H(+). Catalyzes the methylthiolation of N6-(dimethylallyl)adenosine (i(6)A), leading to the formation of 2-methylthio-N6-(dimethylallyl)adenosine (ms(2)i(6)A) at position 37 in tRNAs that read codons beginning with uridine. The protein is tRNA-2-methylthio-N(6)-dimethylallyladenosine synthase of Stutzerimonas stutzeri (strain A1501) (Pseudomonas stutzeri).